A 1093-amino-acid chain; its full sequence is Isoleucine--tRNA ligase, chloroplastic/mitochondrial (1093 aa).

The tract at residues 69 to 103 (PNNEFGHSSKRRSRGPVMAAKKASEGEKQEDGKYK) is disordered. Over residues 90–103 (KASEGEKQEDGKYK) the composition is skewed to basic and acidic residues. Positions 155–165 (PYANGDLHMGH) match the 'HIGH' region motif. E682 contributes to the L-isoleucyl-5'-AMP binding site. The short motif at 723–727 (KMSKS) is the 'KMSKS' region element. K726 serves as a coordination point for ATP. Positions 1050, 1053, 1070, and 1073 each coordinate Zn(2+).

This sequence belongs to the class-I aminoacyl-tRNA synthetase family.

It localises to the plastid. The protein localises to the chloroplast. The protein resides in the mitochondrion. The enzyme catalyses tRNA(Ile) + L-isoleucine + ATP = L-isoleucyl-tRNA(Ile) + AMP + diphosphate. The polypeptide is Isoleucine--tRNA ligase, chloroplastic/mitochondrial (Arabidopsis thaliana (Mouse-ear cress)).